Here is a 1093-residue protein sequence, read N- to C-terminus: Mediator of RNA polymerase II transcription subunit 14 (1093 aa).

Disordered regions lie at residues 1 to 61 (MPGV…KIDG) and 1035 to 1060 (TKSD…SQAA). Residues 19-31 (DTQTPSNGDNLRN) show a composition bias toward polar residues. Over residues 41 to 61 (KGDKDHDPDKESYTGKPKIDG) the composition is skewed to basic and acidic residues. Positions 1040 to 1056 (DYSTQPVPEKQSQTGAP) are enriched in polar residues.

It belongs to the Mediator complex subunit 14 family. Component of the Mediator complex.

It localises to the nucleus. In terms of biological role, component of the Mediator complex, a coactivator involved in the regulated transcription of nearly all RNA polymerase II-dependent genes. Mediator functions as a bridge to convey information from gene-specific regulatory proteins to the basal RNA polymerase II transcription machinery. Mediator is recruited to promoters by direct interactions with regulatory proteins and serves as a scaffold for the assembly of a functional preinitiation complex with RNA polymerase II and the general transcription factors. The chain is Mediator of RNA polymerase II transcription subunit 14 (rgr1) from Neosartorya fischeri (strain ATCC 1020 / DSM 3700 / CBS 544.65 / FGSC A1164 / JCM 1740 / NRRL 181 / WB 181) (Aspergillus fischerianus).